A 49-amino-acid polypeptide reads, in one-letter code: Large ribosomal subunit protein eL40 (49 aa).

It belongs to the eukaryotic ribosomal protein eL40 family.

This Haloquadratum walsbyi (strain DSM 16790 / HBSQ001) protein is Large ribosomal subunit protein eL40.